We begin with the raw amino-acid sequence, 417 residues long: Probable cysteine desulfurase (417 aa).

Residue Lys-233 is modified to N6-(pyridoxal phosphate)lysine. Cys-373 functions as the Cysteine persulfide intermediate in the catalytic mechanism.

Belongs to the class-V pyridoxal-phosphate-dependent aminotransferase family. Csd subfamily. The cofactor is pyridoxal 5'-phosphate.

The enzyme catalyses (sulfur carrier)-H + L-cysteine = (sulfur carrier)-SH + L-alanine. Functionally, catalyzes the removal of elemental sulfur and selenium atoms from L-cysteine, L-cystine, L-selenocysteine, and L-selenocystine to produce L-alanine. The protein is Probable cysteine desulfurase (csd) of Mycobacterium tuberculosis (strain CDC 1551 / Oshkosh).